A 283-amino-acid polypeptide reads, in one-letter code: Acetylglutamate kinase (283 aa).

Substrate is bound by residues 64–65 (GG), R86, and N178.

It belongs to the acetylglutamate kinase family. ArgB subfamily.

Its subcellular location is the cytoplasm. It carries out the reaction N-acetyl-L-glutamate + ATP = N-acetyl-L-glutamyl 5-phosphate + ADP. Its pathway is amino-acid biosynthesis; L-arginine biosynthesis; N(2)-acetyl-L-ornithine from L-glutamate: step 2/4. Its function is as follows. Catalyzes the ATP-dependent phosphorylation of N-acetyl-L-glutamate. In Lactococcus lactis subsp. cremoris (strain MG1363), this protein is Acetylglutamate kinase.